Consider the following 407-residue polypeptide: DNA primase DnaG (407 aa).

Residues 172–248 (DWIIVVEGRA…HIDYVARAPP (77 aa)) form the Toprim domain. The Mg(2+) site is built by Glu178, Asp222, and Asp224. A disordered region spans residues 279 to 304 (AGAEKTEAAAPPPQQPTAPPAAPSQQ). Positions 288–300 (APPPQQPTAPPAA) are enriched in pro residues.

This sequence belongs to the archaeal DnaG primase family. As to quaternary structure, forms a ternary complex with MCM helicase and DNA. Component of the archaeal exosome complex. Requires Mg(2+) as cofactor.

It carries out the reaction ssDNA + n NTP = ssDNA/pppN(pN)n-1 hybrid + (n-1) diphosphate.. Functionally, RNA polymerase that catalyzes the synthesis of short RNA molecules used as primers for DNA polymerase during DNA replication. Also part of the exosome, which is a complex involved in RNA degradation. Acts as a poly(A)-binding protein that enhances the interaction between heteromeric, adenine-rich transcripts and the exosome. In Pyrobaculum calidifontis (strain DSM 21063 / JCM 11548 / VA1), this protein is DNA primase DnaG.